Consider the following 86-residue polypeptide: Large ribosomal subunit protein bL27c (86 aa).

Residues 1–27 (MAHKKGSGSTRNGRDSNSKRLGVKKYG) are disordered.

This sequence belongs to the bacterial ribosomal protein bL27 family.

Its subcellular location is the plastid. It is found in the chloroplast. The sequence is that of Large ribosomal subunit protein bL27c from Pyropia yezoensis (Susabi-nori).